The chain runs to 865 residues: Armadillo repeat-containing protein 2 (865 aa).

Disordered regions lie at residues 39–75 and 214–243; these read TVRT…FSVH and SVPF…DQSR. The span at 60–75 shows a compositional bias: polar residues; it reads SSRTPENRPPSSFSVH. ARM repeat units follow at residues 261–300, 303–343, 362–402, 407–448, 461–502, 505–546, 550–587, 589–614, 617–660, 662–703, 705–744, and 746–788; these read IEVD…HALE, NMLG…ALKV, EKND…TIKF, PEFL…HLLV, PLAR…KLTS, DCCV…NLTA, QARE…GEGD, RPEA…NLAI, GVGP…NLSY, KVKN…NLSQ, HDIC…NLTV, and RDKR…NFSE.

Its function is as follows. Required for sperm flagellum axoneme organization and function. Involved in axonemal central pair complex assembly and/or stability. In Bos taurus (Bovine), this protein is Armadillo repeat-containing protein 2.